The sequence spans 447 residues: Ribosomal protein uS12 methylthiotransferase RimO (447 aa).

One can recognise an MTTase N-terminal domain in the interval 10 to 120; sequence PKVGFVSLGC…VVNAVHDVVP (111 aa). Cysteine 19, cysteine 55, cysteine 84, cysteine 153, cysteine 157, and cysteine 160 together coordinate [4Fe-4S] cluster. A Radical SAM core domain is found at 139-377; it reads LTPRHYAYLK…MAHQQAISAA (239 aa). One can recognise a TRAM domain in the interval 380–447; sequence QMKIGKEIEV…DEYDLWAEML (68 aa).

This sequence belongs to the methylthiotransferase family. RimO subfamily. [4Fe-4S] cluster is required as a cofactor.

It is found in the cytoplasm. The enzyme catalyses L-aspartate(89)-[ribosomal protein uS12]-hydrogen + (sulfur carrier)-SH + AH2 + 2 S-adenosyl-L-methionine = 3-methylsulfanyl-L-aspartate(89)-[ribosomal protein uS12]-hydrogen + (sulfur carrier)-H + 5'-deoxyadenosine + L-methionine + A + S-adenosyl-L-homocysteine + 2 H(+). In terms of biological role, catalyzes the methylthiolation of an aspartic acid residue of ribosomal protein uS12. This Pseudomonas savastanoi pv. phaseolicola (strain 1448A / Race 6) (Pseudomonas syringae pv. phaseolicola (strain 1448A / Race 6)) protein is Ribosomal protein uS12 methylthiotransferase RimO.